A 116-amino-acid chain; its full sequence is Large ribosomal subunit protein bL19 (116 aa).

This sequence belongs to the bacterial ribosomal protein bL19 family.

In terms of biological role, this protein is located at the 30S-50S ribosomal subunit interface and may play a role in the structure and function of the aminoacyl-tRNA binding site. The chain is Large ribosomal subunit protein bL19 (rplS) from Geobacillus stearothermophilus (Bacillus stearothermophilus).